Reading from the N-terminus, the 254-residue chain is Ankyrin repeat domain-containing protein 7 (254 aa).

5 ANK repeats span residues 58–87 (KYRT…KINV), 91–120 (ENKS…DPDL), 124–153 (RYNT…DLEA), 157–186 (DGYT…DVNA), and 190–219 (YQRT…ELCY).

As to expression, testis specific.

The chain is Ankyrin repeat domain-containing protein 7 (ANKRD7) from Homo sapiens (Human).